The chain runs to 235 residues: Large ribosomal subunit protein uL1 (235 aa).

Belongs to the universal ribosomal protein uL1 family. Part of the 50S ribosomal subunit.

Its function is as follows. Binds directly to 23S rRNA. The L1 stalk is quite mobile in the ribosome, and is involved in E site tRNA release. Protein L1 is also a translational repressor protein, it controls the translation of the L11 operon by binding to its mRNA. The sequence is that of Large ribosomal subunit protein uL1 from Parasynechococcus marenigrum (strain WH8102).